Reading from the N-terminus, the 363-residue chain is NADH-quinone oxidoreductase subunit H (363 aa).

10 helical membrane passes run 29 to 49, 62 to 82, 96 to 116, 127 to 147, 163 to 183, 202 to 222, 239 to 257, 264 to 286, 299 to 319, and 339 to 359; these read VLKI…YVVW, GPMY…KLLF, FIIA…VVPF, VGLL…ILAG, AAQV…VMIA, FFDW…VSGV, IVAG…LFFL, ILVS…QGWV, TGGW…YIWF, and FIPL…YGVI.

The protein belongs to the complex I subunit 1 family. In terms of assembly, NDH-1 is composed of 14 different subunits. Subunits NuoA, H, J, K, L, M, N constitute the membrane sector of the complex.

It localises to the cell inner membrane. It carries out the reaction a quinone + NADH + 5 H(+)(in) = a quinol + NAD(+) + 4 H(+)(out). Its function is as follows. NDH-1 shuttles electrons from NADH, via FMN and iron-sulfur (Fe-S) centers, to quinones in the respiratory chain. The immediate electron acceptor for the enzyme in this species is believed to be ubiquinone. Couples the redox reaction to proton translocation (for every two electrons transferred, four hydrogen ions are translocated across the cytoplasmic membrane), and thus conserves the redox energy in a proton gradient. This subunit may bind ubiquinone. The protein is NADH-quinone oxidoreductase subunit H of Xanthomonas campestris pv. campestris (strain B100).